The sequence spans 36 residues: Photosystem I reaction center subunit VIII (36 aa).

Residues Ser8 to Leu28 traverse the membrane as a helical segment.

This sequence belongs to the PsaI family.

The protein resides in the plastid. It is found in the chloroplast thylakoid membrane. May help in the organization of the PsaL subunit. In Jasminum nudiflorum (Winter jasmine), this protein is Photosystem I reaction center subunit VIII.